The following is a 569-amino-acid chain: Hexose transporter HXT8 (569 aa).

The disordered stretch occupies residues 1–38; sequence MTDRKTNLPEEPIFEEAEDDGCPSIENSSHLSVPTVEE. The Cytoplasmic segment spans residues 1–61; the sequence is MTDRKTNLPE…EVVVPEKPAS (61 aa). Acidic residues predominate over residues 12–21; the sequence is PIFEEAEDDG. The helical transmembrane segment at 62 to 82 threads the bilayer; it reads AYATVSIMCLCMAFGGFMSGW. Topologically, residues 83–118 are extracellular; the sequence is DTGTISGFVNQTDFLRRFGNYSHSKNTYYLSNVRTG. N-linked (GlcNAc...) asparagine glycosylation is found at Asn-92 and Asn-102. Residues 119 to 139 traverse the membrane as a helical segment; the sequence is LIVSIFNVGSAIGCLFLSKLG. Residues 140 to 145 lie on the Cytoplasmic side of the membrane; that stretch reads DIYGRC. Residues 146–166 traverse the membrane as a helical segment; that stretch reads MGLIIVIVVYMVGIVIQIASI. Topologically, residues 167–176 are extracellular; it reads DKWYQYFIGR. A helical transmembrane segment spans residues 177–197; sequence IIAGIGAGSISVLAPMLISET. At 198-203 the chain is on the cytoplasmic side; it reads APKHIR. The chain crosses the membrane as a helical span at residues 204 to 224; it reads GTLLACWQLMVTFAIFLGYCT. Topologically, residues 225 to 238 are extracellular; that stretch reads NYGTKTYSNSVQWR. Residues 239-259 form a helical membrane-spanning segment; sequence VPLGLCFAWAIIMIGGMTFVP. The Cytoplasmic portion of the chain corresponds to 260–342; it reads ESPRFLVQVG…INSLQQLTGD (83 aa). The helical transmembrane segment at 343–359 threads the bilayer; that stretch reads NYFFYYGTTIFKSVGMN. Residues 360-365 are Extracellular-facing; the sequence is DSFETS. A helical transmembrane segment spans residues 366-383; sequence IVLGIVNFASCFFSLYSV. The Cytoplasmic portion of the chain corresponds to 384 to 390; sequence DKLGRRR. The helical transmembrane segment at 391–411 threads the bilayer; it reads CLLLGAATMTACMVIYASVGV. Residues 412–433 are Extracellular-facing; that stretch reads TRLYPNGKSEPSSKGAGNCTIV. Residue Asn-429 is glycosylated (N-linked (GlcNAc...) asparagine). A helical membrane pass occupies residues 434–454; sequence FTCFYIFCFSCTWGPVCYVII. Topologically, residues 455 to 471 are cytoplasmic; it reads SETFPLRVRSKCMSVAT. A helical transmembrane segment spans residues 472–492; that stretch reads AANLLWGFLIGFFTPFITSAI. Position 493 (Asn-493) is a topological domain, extracellular. The helical transmembrane segment at 494-514 threads the bilayer; it reads FYYGYVFMGCLAFSYFYVFFF. At 515-569 the chain is on the cytoplasmic side; sequence VPETKGLTLEEVDEMWMDGVLPWKSESWVPASRRDGDYDNEKLQHDEKPFYKRMF.

It belongs to the major facilitator superfamily. Sugar transporter (TC 2.A.1.1) family.

It localises to the membrane. Its function is as follows. Probable glucose transporter. The polypeptide is Hexose transporter HXT8 (HXT8) (Saccharomyces cerevisiae (strain ATCC 204508 / S288c) (Baker's yeast)).